A 706-amino-acid polypeptide reads, in one-letter code: Fatty acid oxidation complex subunit alpha (706 aa).

The enoyl-CoA hydratase stretch occupies residues 1–188 (MEKTFNLTRR…KMGLVNDVVP (188 aa)). Residues 308–706 (RKVKKAVILG…TMAQENAHFF (399 aa)) form a 3-hydroxyacyl-CoA dehydrogenase region.

It in the N-terminal section; belongs to the enoyl-CoA hydratase/isomerase family. In the central section; belongs to the 3-hydroxyacyl-CoA dehydrogenase family. In terms of assembly, heterotetramer of two alpha chains (FadJ) and two beta chains (FadI).

The protein localises to the cytoplasm. It catalyses the reaction a (3S)-3-hydroxyacyl-CoA = a (2E)-enoyl-CoA + H2O. The catalysed reaction is a 4-saturated-(3S)-3-hydroxyacyl-CoA = a (3E)-enoyl-CoA + H2O. The enzyme catalyses a (3S)-3-hydroxyacyl-CoA + NAD(+) = a 3-oxoacyl-CoA + NADH + H(+). It carries out the reaction (3S)-3-hydroxybutanoyl-CoA = (3R)-3-hydroxybutanoyl-CoA. Its pathway is lipid metabolism; fatty acid beta-oxidation. Functionally, catalyzes the formation of a hydroxyacyl-CoA by addition of water on enoyl-CoA. Also exhibits 3-hydroxyacyl-CoA epimerase and 3-hydroxyacyl-CoA dehydrogenase activities. In Shewanella baltica (strain OS185), this protein is Fatty acid oxidation complex subunit alpha.